The following is a 396-amino-acid chain: Elongation factor Tu (396 aa).

Positions 10-205 constitute a tr-type G domain; that stretch reads KPHVNIGTIG…ACDESIPDPE (196 aa). The segment at 19-26 is G1; the sequence is GHVDHGKT. 19 to 26 contributes to the GTP binding site; sequence GHVDHGKT. Residue Thr-26 coordinates Mg(2+). The tract at residues 62–66 is G2; the sequence is GITIN. The interval 83 to 86 is G3; it reads DAPG. GTP-binding positions include 83–87 and 138–141; these read DAPGH and NKCD. Residues 138-141 form a G4 region; that stretch reads NKCD. Residues 175–177 are G5; the sequence is SAL.

Belongs to the TRAFAC class translation factor GTPase superfamily. Classic translation factor GTPase family. EF-Tu/EF-1A subfamily. In terms of assembly, monomer.

Its subcellular location is the cytoplasm. It carries out the reaction GTP + H2O = GDP + phosphate + H(+). In terms of biological role, GTP hydrolase that promotes the GTP-dependent binding of aminoacyl-tRNA to the A-site of ribosomes during protein biosynthesis. In Corynebacterium jeikeium (strain K411), this protein is Elongation factor Tu.